We begin with the raw amino-acid sequence, 60 residues long: UPF0434 protein YE1549 (60 aa).

It belongs to the UPF0434 family.

The chain is UPF0434 protein YE1549 from Yersinia enterocolitica serotype O:8 / biotype 1B (strain NCTC 13174 / 8081).